Reading from the N-terminus, the 179-residue chain is Large ribosomal subunit protein uL5 (179 aa).

Belongs to the universal ribosomal protein uL5 family. In terms of assembly, part of the 50S ribosomal subunit; part of the 5S rRNA/L5/L18/L25 subcomplex. Contacts the 5S rRNA and the P site tRNA. Forms a bridge to the 30S subunit in the 70S ribosome.

This is one of the proteins that bind and probably mediate the attachment of the 5S RNA into the large ribosomal subunit, where it forms part of the central protuberance. In the 70S ribosome it contacts protein S13 of the 30S subunit (bridge B1b), connecting the 2 subunits; this bridge is implicated in subunit movement. Contacts the P site tRNA; the 5S rRNA and some of its associated proteins might help stabilize positioning of ribosome-bound tRNAs. This is Large ribosomal subunit protein uL5 from Vibrio vulnificus (strain CMCP6).